We begin with the raw amino-acid sequence, 636 residues long: Basic helix-loop-helix ARNT-like protein 2 (636 aa).

The interval 25–62 is disordered; the sequence is VSSRVSPGTRPTAMGSFSSHMTEFPRKRKGSDSDPSQS. An interaction with PER2 region spans residues 46–258; sequence TEFPRKRKGS…SPREKLIDAK (213 aa). A Nuclear localization signal motif is present at residues 49-54; the sequence is PRKRKG. In terms of domain architecture, bHLH spans 107–160; sequence AFREAHSQTEKRRRDKMNNLIEELSAMIPQCNPMARKLDKLTVLRMAVQHLRSL. A Nuclear export signal 1 motif is present at residues 177 to 187; that stretch reads LQDNELRHLIL. Positions 178 to 250 constitute a PAS 1 domain; that stretch reads QDNELRHLIL…EQLSSFDISP (73 aa). Lys-287 is covalently cross-linked (Glycyl lysine isopeptide (Lys-Gly) (interchain with G-Cter in SUMO2 and SUMO3)). Lys-294 is covalently cross-linked (Glycyl lysine isopeptide (Lys-Gly) (interchain with G-Cter in SUMO2)). The PAS 2 domain maps to 357–427; the sequence is VPQNSGEINV…DKHKAVLQSK (71 aa). A Nuclear export signal 2 motif is present at residues 392 to 400; that stretch reads LGYLPQELL. The region spanning 432-475 is the PAC domain; the sequence is TDSYKFRAKDGSFVTLKSQWFSFTNPWTKELEYIVSVNTLVLGH.

In terms of assembly, component of the circadian core oscillator, which includes the CRY proteins, CLOCK, or NPAS2, BMAL1 or BMAL2, CSNK1D and/or CSNK1E, TIMELESS and the PER proteins. Interacts directly with CLOCK to form the BMAL2-CLOCK transactivator. Can form heterodimers or homodimers which interact directly with CLOCK to form the transcription activator. Interacts with NPAS2 and HIF1A. Interacts with PER2. As to expression, expressed in fetal brain. Highly expressed in brain and placenta. Lower levels in heart, liver, thymus, kidney and lung. Located to endothelial cells and neuronal cells of the suprachiasmatic nucleus (SCN). Also detected in endothelial cells of the heart, lung and kidney. In the brain, specifically expressed in the thalamus, hippocampus and amygdala.

The protein resides in the nucleus. Functionally, transcriptional activator which forms a core component of the circadian clock. The circadian clock, an internal time-keeping system, regulates various physiological processes through the generation of approximately 24 hour circadian rhythms in gene expression, which are translated into rhythms in metabolism and behavior. It is derived from the Latin roots 'circa' (about) and 'diem' (day) and acts as an important regulator of a wide array of physiological functions including metabolism, sleep, body temperature, blood pressure, endocrine, immune, cardiovascular, and renal function. Consists of two major components: the central clock, residing in the suprachiasmatic nucleus (SCN) of the brain, and the peripheral clocks that are present in nearly every tissue and organ system. Both the central and peripheral clocks can be reset by environmental cues, also known as Zeitgebers (German for 'timegivers'). The predominant Zeitgeber for the central clock is light, which is sensed by retina and signals directly to the SCN. The central clock entrains the peripheral clocks through neuronal and hormonal signals, body temperature and feeding-related cues, aligning all clocks with the external light/dark cycle. Circadian rhythms allow an organism to achieve temporal homeostasis with its environment at the molecular level by regulating gene expression to create a peak of protein expression once every 24 hours to control when a particular physiological process is most active with respect to the solar day. Transcription and translation of core clock components (CLOCK, NPAS2, BMAL1, BMAL2, PER1, PER2, PER3, CRY1 and CRY2) plays a critical role in rhythm generation, whereas delays imposed by post-translational modifications (PTMs) are important for determining the period (tau) of the rhythms (tau refers to the period of a rhythm and is the length, in time, of one complete cycle). A diurnal rhythm is synchronized with the day/night cycle, while the ultradian and infradian rhythms have a period shorter and longer than 24 hours, respectively. Disruptions in the circadian rhythms contribute to the pathology of cardiovascular diseases, cancer, metabolic syndromes and aging. A transcription/translation feedback loop (TTFL) forms the core of the molecular circadian clock mechanism. Transcription factors, CLOCK or NPAS2 and BMAL1 or BMAL2, form the positive limb of the feedback loop, act in the form of a heterodimer and activate the transcription of core clock genes and clock-controlled genes (involved in key metabolic processes), harboring E-box elements (5'-CACGTG-3') within their promoters. The core clock genes: PER1/2/3 and CRY1/2 which are transcriptional repressors form the negative limb of the feedback loop and interact with the CLOCK|NPAS2-BMAL1|BMAL2 heterodimer inhibiting its activity and thereby negatively regulating their own expression. This heterodimer also activates nuclear receptors NR1D1/2 and RORA/B/G, which form a second feedback loop and which activate and repress BMAL1 transcription, respectively. The CLOCK-BMAL2 heterodimer activates the transcription of SERPINE1/PAI1 and BHLHE40/DEC1. The sequence is that of Basic helix-loop-helix ARNT-like protein 2 from Homo sapiens (Human).